A 465-amino-acid polypeptide reads, in one-letter code: Argininosuccinate lyase (465 aa).

This sequence belongs to the lyase 1 family. Argininosuccinate lyase subfamily.

It localises to the cytoplasm. It carries out the reaction 2-(N(omega)-L-arginino)succinate = fumarate + L-arginine. It participates in amino-acid biosynthesis; L-arginine biosynthesis; L-arginine from L-ornithine and carbamoyl phosphate: step 3/3. This is Argininosuccinate lyase from Nitrobacter winogradskyi (strain ATCC 25391 / DSM 10237 / CIP 104748 / NCIMB 11846 / Nb-255).